Consider the following 534-residue polypeptide: Glucans biosynthesis protein D (534 aa).

Positions 1 to 30 (MRMQRRHLLKNAAAALAALGLPALPQWALA) form a signal peptide, tat-type signal.

It belongs to the OpgD/OpgG family. Post-translationally, predicted to be exported by the Tat system. The position of the signal peptide cleavage has not been experimentally proven.

It is found in the periplasm. It functions in the pathway glycan metabolism; osmoregulated periplasmic glucan (OPG) biosynthesis. Functionally, probably involved in the control of the structural glucose backbone of osmoregulated periplasmic glucans (OPGs). The sequence is that of Glucans biosynthesis protein D from Xanthomonas oryzae pv. oryzae (strain KACC10331 / KXO85).